The chain runs to 133 residues: MPYVYANAKALQDTEKVGNHHQCVELIQHYIRVGQASTWQQGAAVFGNKNIEVGTVIATFVNGRYPNHNSGNHAAFFLGQDTGGIWVMDQWKDDIAKPRVSKRYIRKLHNGSVRSDGTYIRMSNNAEAYFIVE.

Catalysis depends on residues C23 and H73.

Belongs to the cell wall amidase Dae2/Tae2-like family.

The protein resides in the host periplasm. It localises to the secreted. The protein operates within cell wall degradation; peptidoglycan degradation. Toxic component of a contact-dependent interbacterial competition system (also called effector-immunity systems). Secreted by the SPI-6 type VI secretion system, probably into the periplasm of bacterial target cells. A cell wall amidase with specificity toward the D-meso-DAP-D-alanine bond (D-meso-diaminopimelic-D-alanine) found in peptidoglycan of Gram-negative bacteria. Toxicity is counteracted by a cognate immunity protein Tai2 (t2585), but not immunity proteins associated with a similar endopeptidase in other bacteria. In vitro degrades peptidoglycans from Gram-negative but not Gram-positive bacteria. In Salmonella typhi, this protein is Type VI secretion amidase effector 2 protein.